An 805-amino-acid chain; its full sequence is Ubiquitin carboxyl-terminal hydrolase 10-B (805 aa).

Disordered stretches follow at residues 136 to 173 and 284 to 305; these read AIPDGSGNADSDGTSGTGQRERKKKKKRPPGYYSYLEG and DTTENLGVTNGQTLESPEEDTV. 2 stretches are compositionally biased toward polar residues: residues 143-153 and 284-298; these read NADSDGTSGTG and DTTENLGVTNGQTLE. Residues 422 to 802 enclose the USP domain; it reads RGLINKGNWC…TAYLLYYRRV (381 aa). Residue Cys-431 is the Nucleophile of the active site. Positions 573 to 600 are disordered; the sequence is EEVNKEEQEGSDEEWEQVGPRNKSSVTR. The Proton acceptor role is filled by His-756.

The protein belongs to the peptidase C19 family. USP10 subfamily.

The protein resides in the cytoplasm. It is found in the nucleus. The enzyme catalyses Thiol-dependent hydrolysis of ester, thioester, amide, peptide and isopeptide bonds formed by the C-terminal Gly of ubiquitin (a 76-residue protein attached to proteins as an intracellular targeting signal).. In terms of biological role, hydrolase that can remove conjugated ubiquitin from target proteins such as p53/tp53, rps2/us5, rps3/us3, rps10/eS10, becn1, snx3 and cftr. Acts as an essential regulator of p53/tp53 stability: in unstressed cells, specifically deubiquitinates p53/tp53 in the cytoplasm, leading to counteracts MDM2 action and stabilize p53/tp53. Following DNA damage, translocates to the nucleus and deubiquitinates p53/tp53, leading to regulate the p53/TP53-dependent DNA damage response. Component of a regulatory loop that controls autophagy and p53/tp53 levels. Plays a key role in 40S ribosome subunit recycling when a ribosome has stalled during translation: acts both by inhibiting formation of stress granules, which store stalled translation pre-initiation complexes, and mediating deubiquitination of 40S ribosome subunits. Deubiquitinates cftr in early endosomes, enhancing its endocytic recycling. The chain is Ubiquitin carboxyl-terminal hydrolase 10-B (usp10-b) from Xenopus laevis (African clawed frog).